Consider the following 1057-residue polypeptide: Adenylate-forming reductase stbB (1057 aa).

The interval 21–378 (STKRQPGAVC…FRLRTDMNFE (358 aa)) is adenylation (A) domain. AMP is bound by residues His251, 344–345 (NF), Thr349, and 423–426 (AVGR). The 88-residue stretch at 564–651 (ETLEEDIKAL…QMAAAIKNPS (88 aa)) folds into the Carrier domain. Ser600 carries the O-(pantetheine 4'-phosphoryl)serine modification. The tract at residues 693–1025 (IVVVTGSSGS…SGAVILGTDV (333 aa)) is reductase (R) domain. NADP(+) is bound by residues 700–703 (SGSL), 783–785 (AAW), Tyr858, and Lys862.

This sequence belongs to the adenylate-forming reductase family.

The catalysed reaction is ilicicolinate B + AH2 + ATP = ilicicolin B + A + AMP + diphosphate. Its pathway is secondary metabolite biosynthesis; terpenoid biosynthesis. In terms of biological role, nonribosomal peptide synthase-like protein; part of the cluster that mediates the biosynthesis of LL-Z1272-beta, also known as ilicicolin B, a prenylated aryl-aldehyde produced by several fungi and that serves as a key pathway intermediate for many fungal meroterpenoids. The first step in the pathway is performed by the non-reducing polyketide synthase stbA that produces orsellinic acid by condensing acetyl-CoA with 3 malonyl-CoA units. The prenyltransferase stbC then prenylates orsenilic acid into grifolic acid. Finally, grifolic acid is reduced to ilicicolin B by the NRPS-like protein stbB. The chain is Adenylate-forming reductase stbB from Stachybotrys bisbyi (Hyalostachybotrys bisbyi).